The primary structure comprises 269 residues: MAHDREVLRMIWEGQIGICFQADRDEIVGIKPEPFYLMISRLSYLPLVTDKVRKYFSRYISAEHQDGAVWFDFNGTPLRLHYPIGVLYDLLHPEEDSTPWCLTIHFSKFPEDMLVKLNSKELLESHYMSCLKEADVLKHRGLVISAMQKKDHNQLWLGLVNEKFDQFWAVNRRLMEPYGDLESFKNIPLRIYTDDDFTYTQKLISPISVGGQKKSLADLMAELSTPVRRAVGCRTHGIDLHEETQLQWMSEHLSYPDNFLHLSVDYKDV.

Lysine 132 is covalently cross-linked (Glycyl lysine isopeptide (Lys-Gly) (interchain with G-Cter in ATG12)).

Belongs to the ATG5 family. Conjugated to Atg12, which is essential for autophagy.

It is found in the cytoplasm. The protein localises to the preautophagosomal structure membrane. Functionally, involved in autophagic vesicle formation. Conjugation with Atg12, through a ubiquitin-like conjugating system involving Atg7 as an E1-like activating enzyme and Atg10 as an E2-like conjugating enzyme, is essential for its function. The Atg12-Atg5 conjugate acts as an E3-like enzyme which is required for lipidation of Atg8 and its association to the vesicle membranes. This chain is Autophagy protein 5 (Atg5), found in Drosophila melanogaster (Fruit fly).